A 39-amino-acid polypeptide reads, in one-letter code: MTESGRIPLWLVATVAGMGVITLLGIFFYGAYAGLGSAV.

The helical transmembrane segment at isoleucine 7 to phenylalanine 27 threads the bilayer.

The protein belongs to the PsbJ family. In terms of assembly, PSII is composed of 1 copy each of membrane proteins PsbA, PsbB, PsbC, PsbD, PsbE, PsbF, PsbH, PsbI, PsbJ, PsbK, PsbL, PsbM, PsbT, PsbX, PsbY, PsbZ, Psb30/Ycf12, peripheral proteins PsbO, CyanoQ (PsbQ), PsbU, PsbV and a large number of cofactors. It forms dimeric complexes.

The protein localises to the cellular thylakoid membrane. One of the components of the core complex of photosystem II (PSII). PSII is a light-driven water:plastoquinone oxidoreductase that uses light energy to abstract electrons from H(2)O, generating O(2) and a proton gradient subsequently used for ATP formation. It consists of a core antenna complex that captures photons, and an electron transfer chain that converts photonic excitation into a charge separation. The sequence is that of Photosystem II reaction center protein J from Cyanothece sp. (strain PCC 7425 / ATCC 29141).